A 131-amino-acid chain; its full sequence is Large ribosomal subunit protein eL14 (131 aa).

This sequence belongs to the eukaryotic ribosomal protein eL14 family. In terms of assembly, component of the large ribosomal subunit. Mature ribosomes consist of a small (40S) and a large (60S) subunit. The 40S subunit contains about 32 different proteins and 1 molecule of RNA (18S). The 60S subunit contains 45 different proteins and 3 molecules of RNA (25S, 5.8S and 5S).

Its subcellular location is the cytoplasm. In terms of biological role, component of the ribosome, a large ribonucleoprotein complex responsible for the synthesis of proteins in the cell. The small ribosomal subunit (SSU) binds messenger RNAs (mRNAs) and translates the encoded message by selecting cognate aminoacyl-transfer RNA (tRNA) molecules. The large subunit (LSU) contains the ribosomal catalytic site termed the peptidyl transferase center (PTC), which catalyzes the formation of peptide bonds, thereby polymerizing the amino acids delivered by tRNAs into a polypeptide chain. The nascent polypeptides leave the ribosome through a tunnel in the LSU and interact with protein factors that function in enzymatic processing, targeting, and the membrane insertion of nascent chains at the exit of the ribosomal tunnel. In Candida albicans (strain SC5314 / ATCC MYA-2876) (Yeast), this protein is Large ribosomal subunit protein eL14.